The following is a 477-amino-acid chain: Actin-related protein 7 (477 aa).

Belongs to the actin family. As to quaternary structure, forms a heterodimer with ARP9. Interacts with NPL6. Component of the two forms of the RSC complex composed of at least either RSC1 or RSC2, and ARP7, ARP9, LDB7, NPL6, RSC3, RSC30, RSC4, RSC58, RSC6, RSC8, RSC9, SFH1, STH1, HTL1 and probably RTT102. The complexes interact with histone and histone variant components of centromeric chromatin. Component of the SWI/SNF global transcription activator complex. The 1.14 MDa SWI/SNF complex is composed of 11 different subunits: one copy each of SWI1, SNF2/SWI2, SNF5, SNF12/SWP73, ARP7/SWP61, ARP9/SWP59; two copies each of SWI3, SNF6, SNF11, SWP82; and three copies of TAF14/SWP29.

It localises to the nucleus. Its function is as follows. Component of the chromatin structure remodeling complex (RSC), which is involved in transcription regulation and nucleosome positioning. RSC is responsible for the transfer of a histone octamer from a nucleosome core particle to naked DNA. The reaction requires ATP and involves an activated RSC-nucleosome intermediate. Remodeling reaction also involves DNA translocation, DNA twist and conformational change. As a reconfigurer of centromeric and flanking nucleosomes, RSC complex is required both for proper kinetochore function in chromosome segregation and, via a PKC1-dependent signaling pathway, for organization of the cellular cytoskeleton. This subunit is involved in transcriptional regulation. Heterodimer of ARP7 and ARP9 functions with HMG box proteins to facilitate proper chromatin architecture. Heterodimer formation is necessary for assembly into RSC complex. Part of the SWI/SNF complex, an ATP-dependent chromatin remodeling complex, is required for the positive and negative regulation of gene expression of a large number of genes. It changes chromatin structure by altering DNA-histone contacts within a nucleosome, leading eventually to a change in nucleosome position, thus facilitating or repressing binding of gene-specific transcription factors. The chain is Actin-related protein 7 (ARP7) from Saccharomyces cerevisiae (strain ATCC 204508 / S288c) (Baker's yeast).